The sequence spans 341 residues: MKQSIILGIESSCDDTSAAIISGRKILSNVAATQAIHNEYGGVVPELASRAHQQNIIPVIEQSIQKANIQQNEICAIGFTRGPGLLGSLLVGTSFAKSLAMSLEAPLIEVNHLQAHILAHFIEDANPNPPKFPFLCLTVSGGHTMIVLVKDYFDMEIIGKTIDDAAGEAFDKIGKIFDLDYPAGPIIDKKSQNGSPNAFTFNKPKLEGYDYSFSGIKTSVLYFIQKELKKNPQFVNENIDDLCASVQKNIIEILMTKLEKAASDLGIKEIAIAGGVSANSALRQAMRENEQKLGWNIYIPKFEYTTDNAAMIAMVAQLKYERGEFANLSTTATARYELNVK.

Fe cation-binding residues include His-112 and His-116. Substrate is bound by residues 138 to 142 (TVSGG), Asp-171, Gly-184, Asp-188, and Asn-279. Asp-307 provides a ligand contact to Fe cation.

Belongs to the KAE1 / TsaD family. Requires Fe(2+) as cofactor.

It localises to the cytoplasm. It carries out the reaction L-threonylcarbamoyladenylate + adenosine(37) in tRNA = N(6)-L-threonylcarbamoyladenosine(37) in tRNA + AMP + H(+). Required for the formation of a threonylcarbamoyl group on adenosine at position 37 (t(6)A37) in tRNAs that read codons beginning with adenine. Is involved in the transfer of the threonylcarbamoyl moiety of threonylcarbamoyl-AMP (TC-AMP) to the N6 group of A37, together with TsaE and TsaB. TsaD likely plays a direct catalytic role in this reaction. The protein is tRNA N6-adenosine threonylcarbamoyltransferase of Riemerella anatipestifer (Moraxella anatipestifer).